A 405-amino-acid polypeptide reads, in one-letter code: Tyrosine-protein phosphatase non-receptor type eak-6 (405 aa).

In terms of domain architecture, Tyrosine-protein phosphatase spans 30–309; sequence INQRINIIAD…SFIYDIIIKY (280 aa). Catalysis depends on C248, which acts as the Phosphocysteine intermediate.

This sequence belongs to the protein-tyrosine phosphatase family. In terms of tissue distribution, expressed in the 2 embryonic head hypodermal cells XXXL/R.

Its subcellular location is the cytoplasm. It localises to the cell membrane. It catalyses the reaction O-phospho-L-tyrosyl-[protein] + H2O = L-tyrosyl-[protein] + phosphate. Putative phosphatase which, together with eak-4 and sdf-9, negatively regulates dauer larva formation downstream of insulin-like receptor daf-2 and in parallel of age-1, pdk-1 and akt-1. This chain is Tyrosine-protein phosphatase non-receptor type eak-6, found in Caenorhabditis elegans.